Here is a 1262-residue protein sequence, read N- to C-terminus: SCL-interrupting locus protein homolog (1262 aa).

The tract at residues 1-992 (MNTRFPSSKM…IDSPTKVKKN (992 aa)) is interaction with RBM14. The tract at residues 220-762 (YKHGYITMDE…VSMEAQSSPG (543 aa)) is interaction with CPAP. Disordered stretches follow at residues 369 to 409 (RSSQ…QKIS), 454 to 551 (LCDA…LAPQ), and 650 to 670 (GGMGAYSPHSNGEPSPVAGPS). Composition is skewed to polar residues over residues 473–493 (PTNQLSQDTALRQSRGKQSST), 500–512 (QFRNTNAKPSLSV), and 540–551 (TLDSRQPSLAPQ). The interval 567-760 (PMELQVPTPS…ELVSMEAQSS (194 aa)) is PIN1-binding. 2 positions are modified to phosphoserine: Ser733 and Ser760. Disordered regions lie at residues 782–804 (NAAGDDQEPDSQPKQDDTKISSE), 883–904 (APTEGASNSTELPQGTKDEPYR), 925–959 (NASQETEEPPTKAVVTNRECAKTQNTHHARKKRHN), and 1106–1129 (SSDNSEDEEEPPSHADSESDHVLN). The span at 792–803 (SQPKQDDTKISS) shows a compositional bias: basic and acidic residues. The segment covering 883 to 895 (APTEGASNSTELP) has biased composition (polar residues). Residues 949–959 (NTHHARKKRHN) are compositionally biased toward basic residues. Residue Ser1110 is modified to Phosphoserine. The segment covering 1116 to 1128 (PPSHADSESDHVL) has biased composition (basic and acidic residues).

As to quaternary structure, homodimer. Interacts with PIN1 via its WW domain. This interaction is dependent on Stil mitotic phosphorylation. Interacts with CPAP. Interacts with RBM14 and this interaction interferes with the interaction of STIL with CPAP. Forms a complex with CPAP and SASS6. nteracts (via N-terminus) with CEP85; this interaction is essential for efficient centriolar targeting of STIL and subsequent PLK4 activation. Ubiquitinated. Post-translationally, phosphorylated following the activation of the mitotic checkpoint. In terms of tissue distribution, ubiquitously expressed in adult and fetal tissues. Highly expressed in hematopoietic tissues such as thymus, bone marrow and spleen.

The protein resides in the cytoplasm. It localises to the cytosol. It is found in the cytoskeleton. Its subcellular location is the microtubule organizing center. The protein localises to the centrosome. The protein resides in the centriole. It localises to the cell cortex. Its function is as follows. Immediate-early gene. Plays an important role in embryonic development as well as in cellular growth and proliferation; its long-term silencing affects cell survival and cell cycle distribution as well as decreases CDK1 activity correlated with reduced phosphorylation of CDK1. Plays a role as a positive regulator of the sonic hedgehog pathway, acting downstream of PTCH1. Plays an important role in the regulation of centriole duplication. Required for the onset of procentriole formation and proper mitotic progression. During procentriole formation, is essential for the correct loading of SASS6 and CPAP to the base of the procentriole to initiate procentriole assembly. In complex with STIL acts as a modulator of PLK4-driven cytoskeletal rearrangements and directional cell motility. In Mus musculus (Mouse), this protein is SCL-interrupting locus protein homolog (Stil).